The sequence spans 263 residues: Glucosamine-6-phosphate deaminase (263 aa).

The active-site Proton acceptor; for enolization step is Asp67. Asn136 functions as the For ring-opening step in the catalytic mechanism. His138 functions as the Proton acceptor; for ring-opening step in the catalytic mechanism. The For ring-opening step role is filled by Glu143.

This sequence belongs to the glucosamine/galactosamine-6-phosphate isomerase family. NagB subfamily. In terms of assembly, homohexamer.

The catalysed reaction is alpha-D-glucosamine 6-phosphate + H2O = beta-D-fructose 6-phosphate + NH4(+). It functions in the pathway amino-sugar metabolism; N-acetylneuraminate degradation; D-fructose 6-phosphate from N-acetylneuraminate: step 5/5. Its function is as follows. Catalyzes the reversible isomerization-deamination of glucosamine 6-phosphate (GlcN6P) to form fructose 6-phosphate (Fru6P) and ammonium ion. In Shewanella halifaxensis (strain HAW-EB4), this protein is Glucosamine-6-phosphate deaminase.